Reading from the N-terminus, the 684-residue chain is DNA-directed RNA polymerase subunit beta' (684 aa).

Residues cysteine 69, cysteine 71, cysteine 87, and cysteine 90 each coordinate Zn(2+). Aspartate 491, aspartate 493, and aspartate 495 together coordinate Mg(2+).

It belongs to the RNA polymerase beta' chain family. RpoC1 subfamily. In plastids the minimal PEP RNA polymerase catalytic core is composed of four subunits: alpha, beta, beta', and beta''. When a (nuclear-encoded) sigma factor is associated with the core the holoenzyme is formed, which can initiate transcription. It depends on Mg(2+) as a cofactor. Requires Zn(2+) as cofactor.

The protein resides in the plastid. The protein localises to the chloroplast. It carries out the reaction RNA(n) + a ribonucleoside 5'-triphosphate = RNA(n+1) + diphosphate. DNA-dependent RNA polymerase catalyzes the transcription of DNA into RNA using the four ribonucleoside triphosphates as substrates. The polypeptide is DNA-directed RNA polymerase subunit beta' (Phaseolus vulgaris (Kidney bean)).